The chain runs to 78 residues: Acyl carrier protein (78 aa).

Residues Ser2 to Ser77 enclose the Carrier domain. An O-(pantetheine 4'-phosphoryl)serine modification is found at Ser37.

It belongs to the acyl carrier protein (ACP) family. In terms of processing, 4'-phosphopantetheine is transferred from CoA to a specific serine of apo-ACP by AcpS. This modification is essential for activity because fatty acids are bound in thioester linkage to the sulfhydryl of the prosthetic group.

It localises to the cytoplasm. The protein operates within lipid metabolism; fatty acid biosynthesis. Carrier of the growing fatty acid chain in fatty acid biosynthesis. This is Acyl carrier protein from Photobacterium profundum (strain SS9).